The sequence spans 77 residues: Large ribosomal subunit protein eL20 (77 aa).

This sequence belongs to the eukaryotic ribosomal protein eL20 family. As to quaternary structure, part of the 50S ribosomal subunit. Binds 23S rRNA.

This Thermococcus onnurineus (strain NA1) protein is Large ribosomal subunit protein eL20.